A 242-amino-acid polypeptide reads, in one-letter code: Probable transcriptional regulatory protein NMA1902 (242 aa).

It belongs to the TACO1 family.

The protein localises to the cytoplasm. The chain is Probable transcriptional regulatory protein NMA1902 from Neisseria meningitidis serogroup A / serotype 4A (strain DSM 15465 / Z2491).